We begin with the raw amino-acid sequence, 137 residues long: Putative transcriptional regulatory protein MJ0173 (137 aa).

It belongs to the Tfx family.

In terms of biological role, putative transcriptional regulator. This Methanocaldococcus jannaschii (strain ATCC 43067 / DSM 2661 / JAL-1 / JCM 10045 / NBRC 100440) (Methanococcus jannaschii) protein is Putative transcriptional regulatory protein MJ0173.